A 394-amino-acid chain; its full sequence is Elongation factor Tu (394 aa).

Positions 10–204 (KPHVNVGTIG…ALDTYIPEPE (195 aa)) constitute a tr-type G domain. Residues 19 to 26 (GHVDHGKT) are G1. 19–26 (GHVDHGKT) lines the GTP pocket. A Mg(2+)-binding site is contributed by Thr-26. Residues 60–64 (GITIA) are G2. Residues 81–84 (DCPG) form a G3 region. Residues 81–85 (DCPGH) and 136–139 (NKCD) each bind GTP. Positions 136-139 (NKCD) are G4. Residues 174 to 176 (SAL) are G5.

It belongs to the TRAFAC class translation factor GTPase superfamily. Classic translation factor GTPase family. EF-Tu/EF-1A subfamily. In terms of assembly, monomer.

It is found in the cytoplasm. The catalysed reaction is GTP + H2O = GDP + phosphate + H(+). Functionally, GTP hydrolase that promotes the GTP-dependent binding of aminoacyl-tRNA to the A-site of ribosomes during protein biosynthesis. The chain is Elongation factor Tu from Vibrio parahaemolyticus serotype O3:K6 (strain RIMD 2210633).